Reading from the N-terminus, the 547-residue chain is MSAKDVKFGDSARSKMIAGVNVLADAVKVTLGPKGRNVVIDRSFGAPHITKDGVTVAKEISLKDKFENMGAQLVREVSSKTNDIAGDGTTTATVLAQAILNEGIKSVTAGMNPMDLKRGIDIAVKTVVENIRSIAKPADDFKAIEQVGSISANSDTTVGKLIAQAMEKVGKEGVITVEEGSGFEDALDVVEGMQFDRGYISPYFANKQDTLTAELENPFILLVDKKISNIRELISVLEAVAKTGKPLLIIAEDVEGEALATLVVNNMRGIIKVCAVKAPGFGDRRKAMLQDIAILTGATVISEEVGMSLEQATLQDLGTAHKITVSKENTVIVDGAGDAAAIAERVQQIRAQIEESTSEYDREKLQERVAKLAGGVAVIKIGAATEVEMKEKKDRVDDALHATRAAVEEGVVAGGGVALVRAVNALEGLKGANEDQTAGINILRRAIEAPLRQIVANAGDEPSVVINAVKNGEGNFGYNAATGEYGDMLEMGILDPAKVTRSALEHAASVAGLMLTTECMITDIPEDKPAAPDMGGMGGMGGMGGMM.

ATP is bound by residues 30-33 (TLGP), Lys-51, 87-91 (DGTTT), Gly-415, 479-481 (NAA), and Asp-495.

It belongs to the chaperonin (HSP60) family. As to quaternary structure, forms a cylinder of 14 subunits composed of two heptameric rings stacked back-to-back. Interacts with the co-chaperonin GroES.

It localises to the cytoplasm. It carries out the reaction ATP + H2O + a folded polypeptide = ADP + phosphate + an unfolded polypeptide.. In terms of biological role, together with its co-chaperonin GroES, plays an essential role in assisting protein folding. The GroEL-GroES system forms a nano-cage that allows encapsulation of the non-native substrate proteins and provides a physical environment optimized to promote and accelerate protein folding. This chain is Chaperonin GroEL, found in Acinetobacter baumannii (strain ACICU).